The sequence spans 65 residues: Large ribosomal subunit protein bL35 (65 aa).

The interval 1–23 (MPKIKTNRGAAKRFKKTGTGKVK) is disordered. The span at 10 to 23 (AAKRFKKTGTGKVK) shows a compositional bias: basic residues.

It belongs to the bacterial ribosomal protein bL35 family.

In Trichlorobacter lovleyi (strain ATCC BAA-1151 / DSM 17278 / SZ) (Geobacter lovleyi), this protein is Large ribosomal subunit protein bL35.